Consider the following 249-residue polypeptide: Diaminopimelate epimerase (249 aa).

Asparagine 11 and asparagine 60 together coordinate substrate. The Proton donor role is filled by cysteine 69. Substrate contacts are provided by residues 70–71, asparagine 164, and 182–183; these read GN and ER. The active-site Proton acceptor is the cysteine 192. Residue 193–194 participates in substrate binding; that stretch reads GT.

The protein belongs to the diaminopimelate epimerase family. In terms of assembly, homodimer.

The protein localises to the cytoplasm. It carries out the reaction (2S,6S)-2,6-diaminopimelate = meso-2,6-diaminopimelate. The protein operates within amino-acid biosynthesis; L-lysine biosynthesis via DAP pathway; DL-2,6-diaminopimelate from LL-2,6-diaminopimelate: step 1/1. Catalyzes the stereoinversion of LL-2,6-diaminopimelate (L,L-DAP) to meso-diaminopimelate (meso-DAP), a precursor of L-lysine and an essential component of the bacterial peptidoglycan. In Campylobacter jejuni subsp. jejuni serotype O:23/36 (strain 81-176), this protein is Diaminopimelate epimerase.